We begin with the raw amino-acid sequence, 285 residues long: 3-methyl-2-oxobutanoate hydroxymethyltransferase (285 aa).

The disordered stretch occupies residues 1–23; it reads MSEHNVYGAAQPAQPAQPAQPRT. A compositionally biased stretch (low complexity) spans 9-21; sequence AAQPAQPAQPAQP. Mg(2+)-binding residues include Asp-66 and Asp-105. Residues 66-67, Asp-105, and Lys-135 contribute to the 3-methyl-2-oxobutanoate site; that span reads DS. Glu-137 contacts Mg(2+). Residue Glu-203 is the Proton acceptor of the active site.

It belongs to the PanB family. Homodecamer; pentamer of dimers. It depends on Mg(2+) as a cofactor.

It is found in the cytoplasm. It carries out the reaction 3-methyl-2-oxobutanoate + (6R)-5,10-methylene-5,6,7,8-tetrahydrofolate + H2O = 2-dehydropantoate + (6S)-5,6,7,8-tetrahydrofolate. The protein operates within cofactor biosynthesis; (R)-pantothenate biosynthesis; (R)-pantoate from 3-methyl-2-oxobutanoate: step 1/2. In terms of biological role, catalyzes the reversible reaction in which hydroxymethyl group from 5,10-methylenetetrahydrofolate is transferred onto alpha-ketoisovalerate to form ketopantoate. The chain is 3-methyl-2-oxobutanoate hydroxymethyltransferase from Mycobacterium avium (strain 104).